A 396-amino-acid chain; its full sequence is Ribosomal RNA large subunit methyltransferase I (396 aa).

In terms of domain architecture, PUA spans 2 to 81 (TVRLILAKGR…ESIDIDFFVR (80 aa)).

This sequence belongs to the methyltransferase superfamily. RlmI family.

Its subcellular location is the cytoplasm. The catalysed reaction is cytidine(1962) in 23S rRNA + S-adenosyl-L-methionine = 5-methylcytidine(1962) in 23S rRNA + S-adenosyl-L-homocysteine + H(+). Its function is as follows. Specifically methylates the cytosine at position 1962 (m5C1962) of 23S rRNA. The sequence is that of Ribosomal RNA large subunit methyltransferase I from Erwinia tasmaniensis (strain DSM 17950 / CFBP 7177 / CIP 109463 / NCPPB 4357 / Et1/99).